The sequence spans 240 residues: Anti-H(O) lectin (240 aa).

N-linked (GlcNAc...) asparagine glycosylation is present at Asn-4. The Mn(2+) site is built by Glu-124 and Asp-126. 4 residues coordinate Ca(2+): Asp-126, Tyr-128, Asn-130, and Asp-133. The Mn(2+) site is built by Asp-133 and His-141.

This sequence belongs to the leguminous lectin family.

Functionally, L-fucose specific lectin. This chain is Anti-H(O) lectin, found in Lotus tetragonolobus (Winged pea).